The sequence spans 222 residues: Small ribosomal subunit protein uS3 (222 aa).

Residues 39-109 enclose the KH type-2 domain; it reads IRNFVKKKVY…NILINIVEVK (71 aa).

The protein belongs to the universal ribosomal protein uS3 family. In terms of assembly, part of the 30S ribosomal subunit. Forms a tight complex with proteins S10 and S14.

Its function is as follows. Binds the lower part of the 30S subunit head. Binds mRNA in the 70S ribosome, positioning it for translation. The sequence is that of Small ribosomal subunit protein uS3 from Clostridium tetani (strain Massachusetts / E88).